Reading from the N-terminus, the 400-residue chain is MAKEKFVRSKPHLNVGTIGHIDHGKTTLTAAITKYLSLFGRADYTPYEQIDKAPEEKERGITINIAHIEYETEKRHYAHIDCPGHADYIKNMITGAAQMDGAILVVAATDGPMPQTREHVLLARQVNVPAMIVFINKTDMVDDEELVDLVEMEVRELLNKYEFPGDDLPVIRGSALKAVEASNDPNDEAYAPIKELLDTMDEYFPEPQRETDKPFLMPVEDVFSITGRGTVVTGRIERGVIRPGDEVEIVGMSYEVNKTVVTSVEMFRKILDEGLAGDNVGCLLRGIDKDEVERGQVLAKPGSITPHTTFKAQVYVLKKEEGGRHTPFQKGYKPQFFIRTADVTGELIEFPAGVEMVMPGDNVEMTIKLIYPVAIEEGMRFAIREGGRTVGAGVVTAIVE.

The region spanning 10 to 208 (KPHLNVGTIG…TMDEYFPEPQ (199 aa)) is the tr-type G domain. Positions 19–26 (GHIDHGKT) are G1. 19–26 (GHIDHGKT) contacts GTP. Residue T26 coordinates Mg(2+). The interval 60–64 (GITIN) is G2. The tract at residues 81–84 (DCPG) is G3. Residues 81-85 (DCPGH) and 136-139 (NKTD) each bind GTP. Residues 136–139 (NKTD) are G4. Residues 174–176 (SAL) form a G5 region.

Belongs to the TRAFAC class translation factor GTPase superfamily. Classic translation factor GTPase family. EF-Tu/EF-1A subfamily. As to quaternary structure, monomer.

The protein localises to the cytoplasm. It catalyses the reaction GTP + H2O = GDP + phosphate + H(+). GTP hydrolase that promotes the GTP-dependent binding of aminoacyl-tRNA to the A-site of ribosomes during protein biosynthesis. The sequence is that of Elongation factor Tu from Thermosipho melanesiensis (strain DSM 12029 / CIP 104789 / BI429).